Consider the following 301-residue polypeptide: Probable alpha-L-glutamate ligase 2 (301 aa).

Residues 104–287 (LQLLSRKGIG…VAEPIVEYIE (184 aa)) form the ATP-grasp domain. ATP-binding positions include Lys141, 178–179 (EY), Asp187, and 211–213 (RSN). 3 residues coordinate Mg(2+): Asp248, Glu260, and Asn262. Positions 248, 260, and 262 each coordinate Mn(2+).

Belongs to the RimK family. Requires Mg(2+) as cofactor. Mn(2+) is required as a cofactor.

This Shewanella amazonensis (strain ATCC BAA-1098 / SB2B) protein is Probable alpha-L-glutamate ligase 2.